A 257-amino-acid chain; its full sequence is Receptor expression-enhancing protein 4 (257 aa).

2 consecutive transmembrane segments (helical) span residues 1 to 21 (MVSWMICRLVVLIFGMLYPAY) and 42 to 62 (WIVFAIFMAAETFTDIFISWF). Ser-152 and Ser-194 each carry phosphoserine. The interval 177–257 (VPRRRPPIGY…KKAMPSDMDS (81 aa)) is disordered. Thr-196 bears the Phosphothreonine mark. Phosphoserine occurs at positions 202 and 253.

This sequence belongs to the DP1 family.

Its subcellular location is the endoplasmic reticulum membrane. Functionally, microtubule-binding protein required to ensure proper cell division and nuclear envelope reassembly by sequestering the endoplasmic reticulum away from chromosomes during mitosis. Probably acts by clearing the endoplasmic reticulum membrane from metaphase chromosomes. The sequence is that of Receptor expression-enhancing protein 4 (Reep4) from Mus musculus (Mouse).